A 303-amino-acid chain; its full sequence is Probable 5-dehydro-4-deoxyglucarate dehydratase (303 aa).

This sequence belongs to the DapA family.

The catalysed reaction is 5-dehydro-4-deoxy-D-glucarate + H(+) = 2,5-dioxopentanoate + CO2 + H2O. It participates in carbohydrate acid metabolism; D-glucarate degradation; 2,5-dioxopentanoate from D-glucarate: step 2/2. The sequence is that of Probable 5-dehydro-4-deoxyglucarate dehydratase from Acinetobacter baumannii (strain SDF).